The chain runs to 566 residues: E3 ubiquitin-protein ligase Rnf220 (566 aa).

Residue lysine 277 forms a Glycyl lysine isopeptide (Lys-Gly) (interchain with G-Cter in SUMO2) linkage. Positions 277-300 are disordered; sequence KREGDSPTASPHSSATEDLHHSDR. The span at 291-300 shows a compositional bias: basic and acidic residues; the sequence is ATEDLHHSDR. Residue serine 390 is modified to Phosphoserine. Positions 485–513 form a coiled coil; sequence EESAVTTFEALKARVRELERQLSRGDRYK. The required for targeting to the cytoplasm stretch occupies residues 514–522; it reads CLICMDSYS. An RING-type zinc finger spans residues 514 to 553; it reads CLICMDSYSMPLTSIQCWHVHCEECWLRTLGAKKLCPQCN.

Interacts with SIN3B. Interacts with CTNNB1 (via Armadillo repeats 2-8). Interacts with USP7 (via MATH domain). Auto-ubiquitinated; leads to proteasomal degradation. In the brain, expressed in the hippocampus, telenecephalon and cerebellum. No expression in astro glial cells or in neural progenitor cells.

Its subcellular location is the cytoplasm. The protein localises to the nucleus. The catalysed reaction is S-ubiquitinyl-[E2 ubiquitin-conjugating enzyme]-L-cysteine + [acceptor protein]-L-lysine = [E2 ubiquitin-conjugating enzyme]-L-cysteine + N(6)-ubiquitinyl-[acceptor protein]-L-lysine.. It participates in protein modification; protein ubiquitination. Its function is as follows. E3 ubiquitin-protein ligase that promotes the ubiquitination and proteasomal degradation of SIN3B. Independently of its E3 ligase activity, acts as a CTNNB1 stabilizer through USP7-mediated deubiquitination of CTNNB1 and promotes Wnt signaling. Plays a critical role in the regulation of nuclear lamina. The chain is E3 ubiquitin-protein ligase Rnf220 (Rnf220) from Mus musculus (Mouse).